The following is a 341-amino-acid chain: tRNA N6-adenosine threonylcarbamoyltransferase (341 aa).

Residues histidine 114 and histidine 118 each contribute to the Fe cation site. Substrate-binding positions include 136 to 140 (LVSGG), aspartate 169, glycine 182, aspartate 186, and asparagine 278. Aspartate 304 is a Fe cation binding site.

Belongs to the KAE1 / TsaD family. Requires Fe(2+) as cofactor.

Its subcellular location is the cytoplasm. It catalyses the reaction L-threonylcarbamoyladenylate + adenosine(37) in tRNA = N(6)-L-threonylcarbamoyladenosine(37) in tRNA + AMP + H(+). In terms of biological role, required for the formation of a threonylcarbamoyl group on adenosine at position 37 (t(6)A37) in tRNAs that read codons beginning with adenine. Is involved in the transfer of the threonylcarbamoyl moiety of threonylcarbamoyl-AMP (TC-AMP) to the N6 group of A37, together with TsaE and TsaB. TsaD likely plays a direct catalytic role in this reaction. This Lactococcus lactis subsp. cremoris (strain MG1363) protein is tRNA N6-adenosine threonylcarbamoyltransferase.